The primary structure comprises 1704 residues: Type-2 histone deacetylase 2 (1704 aa).

3 disordered regions span residues 1–303 (MSTN…SEER), 315–383 (TQGS…TSKK), and 540–634 (QFLQ…IGNS). Positions 15–69 (TTITNESNTDNNNNNNDDNKNNTENTTSPTNNNNTNDNDNNSDNNNNKNNNNNNS) are enriched in low complexity. Residues 70–81 (QVTEEQQVTLED) are compositionally biased toward polar residues. The span at 97-113 (DSAEEDEDEMEDDDEDA) shows a compositional bias: acidic residues. Over residues 134-153 (KVQQSTNTHLSQTTPESPTI) the composition is skewed to polar residues. Residues 165-176 (STSTNNTPNTQS) are compositionally biased toward low complexity. Positions 186 to 195 (LTSDEEKDLM) are enriched in basic and acidic residues. The segment covering 196 to 210 (LSEESDGGVGEDDDS) has biased composition (acidic residues). Residues 222–286 (NQSNQNQNNN…SNNDNNNNNN (65 aa)) show a composition bias toward low complexity. Residues 315–325 (TQGSSTTTSDP) show a composition bias toward polar residues. The segment covering 326–351 (NNQNNQINQINQNNQNNQNNQNNQNN) has biased composition (low complexity). Positions 354–369 (GEEEFGEEFEEEEEDM) are enriched in acidic residues. Residues 372–382 (PKKKTKYKTSK) are compositionally biased toward basic residues. Low complexity-rich tracts occupy residues 540–549 (QFLQQQQQQQ) and 561–580 (NSNNSNNNNNNNSNNNNNNS). The span at 608–620 (YETRKYTKKRNDE) shows a compositional bias: basic and acidic residues. Substrate is bound by residues aspartate 1165 and glycine 1227. A divalent metal cation-binding residues include aspartate 1256, histidine 1258, and aspartate 1350. A disordered region spans residues 1485–1704 (QLERQKQLQQ…TPQNINNSDN (220 aa)). Low complexity predominate over residues 1491–1616 (QLQQQQQQAQ…NNSNNNNNMN (126 aa)). The segment covering 1649–1669 (LSPNSVNRGNNPSNISMSGAQ) has biased composition (polar residues). The span at 1677–1698 (SPKPSNSPNSPSTSNNNGTPQN) shows a compositional bias: low complexity.

The protein belongs to the histone deacetylase family. HD type 2 subfamily.

The protein resides in the nucleus. The protein localises to the cytoplasm. It carries out the reaction N(6)-acetyl-L-lysyl-[histone] + H2O = L-lysyl-[histone] + acetate. Responsible for the deacetylation of lysine residues on the N-terminal part of the core histones (H2A, H2B, H3 and H4). Histone deacetylation plays an important role in transcriptional regulation, cell cycle progression and developmental events. Histone deacetylases act via the formation of large multiprotein complexes. In Dictyostelium discoideum (Social amoeba), this protein is Type-2 histone deacetylase 2 (hdaC).